The sequence spans 363 residues: 3-isopropylmalate dehydrogenase (363 aa).

NAD(+) is bound at residue 78-91; sequence GPKWENLPPESQPE. Arg99, Arg109, Arg138, and Asp227 together coordinate substrate. Residues Asp227, Asp251, and Asp255 each coordinate Mg(2+). Residue 285 to 297 coordinates NAD(+); the sequence is GSAPDIAGKNIAN.

This sequence belongs to the isocitrate and isopropylmalate dehydrogenases family. LeuB type 1 subfamily. As to quaternary structure, homodimer. Mg(2+) is required as a cofactor. The cofactor is Mn(2+).

It is found in the cytoplasm. It carries out the reaction (2R,3S)-3-isopropylmalate + NAD(+) = 4-methyl-2-oxopentanoate + CO2 + NADH. It participates in amino-acid biosynthesis; L-leucine biosynthesis; L-leucine from 3-methyl-2-oxobutanoate: step 3/4. Functionally, catalyzes the oxidation of 3-carboxy-2-hydroxy-4-methylpentanoate (3-isopropylmalate) to 3-carboxy-4-methyl-2-oxopentanoate. The product decarboxylates to 4-methyl-2 oxopentanoate. This is 3-isopropylmalate dehydrogenase from Salmonella paratyphi A (strain ATCC 9150 / SARB42).